We begin with the raw amino-acid sequence, 1373 residues long: DNA-directed RNA polymerase subunit beta (1373 aa).

This sequence belongs to the RNA polymerase beta chain family. As to quaternary structure, the RNAP catalytic core consists of 2 alpha, 1 beta, 1 beta' and 1 omega subunit. When a sigma factor is associated with the core the holoenzyme is formed, which can initiate transcription.

The enzyme catalyses RNA(n) + a ribonucleoside 5'-triphosphate = RNA(n+1) + diphosphate. Functionally, DNA-dependent RNA polymerase catalyzes the transcription of DNA into RNA using the four ribonucleoside triphosphates as substrates. In Lawsonia intracellularis (strain PHE/MN1-00), this protein is DNA-directed RNA polymerase subunit beta.